The sequence spans 367 residues: Probable glutamine synthetase (367 aa).

Residues 30–110 (IQATYVWIDG…VMCDTLDHQM (81 aa)) enclose the GS beta-grasp domain. Residues 117 to 367 (HRQACAEIMH…TAMIAQSILF (251 aa)) enclose the GS catalytic domain.

It belongs to the glutamine synthetase family. In terms of assembly, homooctamer.

It localises to the cytoplasm. The catalysed reaction is L-glutamate + NH4(+) + ATP = L-glutamine + ADP + phosphate + H(+). This Caenorhabditis elegans protein is Probable glutamine synthetase (gln-2).